The chain runs to 118 residues: Large ribosomal subunit protein uL22 (118 aa).

This sequence belongs to the universal ribosomal protein uL22 family. Part of the 50S ribosomal subunit.

This protein binds specifically to 23S rRNA; its binding is stimulated by other ribosomal proteins, e.g. L4, L17, and L20. It is important during the early stages of 50S assembly. It makes multiple contacts with different domains of the 23S rRNA in the assembled 50S subunit and ribosome. Functionally, the globular domain of the protein is located near the polypeptide exit tunnel on the outside of the subunit, while an extended beta-hairpin is found that lines the wall of the exit tunnel in the center of the 70S ribosome. In Nostoc punctiforme (strain ATCC 29133 / PCC 73102), this protein is Large ribosomal subunit protein uL22.